The sequence spans 740 residues: Melanoma-associated antigen D4 (740 aa).

The segment covering 1–11 has biased composition (basic and acidic residues); it reads MAEGSYRKESE. Disordered regions lie at residues 1–27, 139–208, 242–298, and 321–377; these read MAEG…EVGE, ATHQ…GPST, PAGV…ALAK, and IPEP…ASQP. Over residues 14 to 27 the composition is skewed to acidic residues; the sequence is NVEDMDEGSDEVGE. Polar residues-rich tracts occupy residues 141–155 and 162–175; these read HQAS…TSAA and PETS…SRML. Residues 185–207 show a composition bias toward low complexity; the sequence is APARSPQPQTSSQAQEAAAEGPS. Residues 321 to 337 show a composition bias toward low complexity; it reads IPEPESAAATSQQSAEP. Over residues 354 to 363 the composition is skewed to acidic residues; the sequence is DEYESGEEER. An MAGE domain is found at 414–612; it reads LQERANKLVK…REWRAHFLEA (199 aa). Residues 697–722 are disordered; the sequence is WRAGVSSGTNGAASASMLDGPSTSST.

Interacts with TRIM27.

May enhance ubiquitin ligase activity of RING-type zinc finger-containing E3 ubiquitin-protein ligases. Proposed to act through recruitment and/or stabilization of the Ubl-conjugating enzyme (E2) at the E3:substrate complex. This Bos taurus (Bovine) protein is Melanoma-associated antigen D4 (MAGED4).